A 253-amino-acid polypeptide reads, in one-letter code: MGEFNEKKTTCGTVCLKYLLFTYNCCFWLAGLAVMAVGIWTLALKSDYISLLASGTYLATAYILVVAGAVVMVTGVLGCCATFKERRNLLRLYFILLLIIFLLEIIAGVLAYVYYQQLNTELKENLKDTMAKRYHQPGHEAVTSAVDQLQQEFHCCGSNNSQDWRDSEWIRLREARGRVVPDSCCKTVVAGCGQRDHAFNIYKVEGGFITKLETFIQEHLRVIGAVGTGIACVQVFGMIFTCCLYRSLKLEHY.

Over 1 to 18 (MGEFNEKKTTCGTVCLKY) the chain is Cytoplasmic. 2 S-palmitoyl cysteine lipidation sites follow: Cys11 and Cys15. Residues 19–39 (LLFTYNCCFWLAGLAVMAVGI) traverse the membrane as a helical segment. Residues 40–57 (WTLALKSDYISLLASGTY) are Extracellular-facing. A helical membrane pass occupies residues 58–78 (LATAYILVVAGAVVMVTGVLG). Over 79 to 91 (CCATFKERRNLLR) the chain is Cytoplasmic. Residues 92-112 (LYFILLLIIFLLEIIAGVLAY) form a helical membrane-spanning segment. Topologically, residues 113–221 (VYYQQLNTEL…LETFIQEHLR (109 aa)) are extracellular. A glycan (N-linked (GlcNAc...) asparagine) is linked at Asn159. A helical membrane pass occupies residues 222-242 (VIGAVGTGIACVQVFGMIFTC). Residues Cys242 and Cys243 are each lipidated (S-palmitoyl cysteine). Topologically, residues 243–253 (CLYRSLKLEHY) are cytoplasmic.

It belongs to the tetraspanin (TM4SF) family. Interacts with integrins ITGA3:ITGB1, ITGA5:ITGB1, ITGA3:ITGB1 and ITGA6:ITGB4 and with CD9 and CD181. Interacts (via the second extracellular domain) with integrin ITGAV:ITGB3. Interacts with ITGA3; this interaction modulates ITGA3 glycosylation pattern. Interacts with F11R. Interacts with RAC1 and CDC42; these interactions mediate physical association of RAC1 and CDC42 with integrin adhesion receptor complexes. Palmitoylated. Palmitoylation by ZDHHC2 regulates CD151 expression, association with other tetraspanin family proteins and function in cell adhesion. In terms of processing, ubiquitinated by RNF128 on lysine residues present in the tetraspanin amino terminus via 'Lys-48'-linked ubiquitin leading to proteasomal degradation.

It is found in the cell membrane. Structural component of specialized membrane microdomains known as tetraspanin-enriched microdomains (TERMs), which act as platforms for receptor clustering and signaling. Plays a role in various cellular and molecular mechanism through its association with both integrin and non-integrin proteins. These interactions facilitate critical cellular functions, including cell-to-cell communication, wound healing, platelet aggregation, trafficking, cell motility, and angiogenesis. Via interaction with JAM-A/F11R and integrin ITGA3:ITGB1, promotes the recruitment of signaling molecules such as RAC1, CDC42 and RhoGTPases to facilitate the polarization of epithelial cells and the reorganization of the actin cytoskeleton, which are critical steps in cell migration process. Regulates the glycosylation pattern of ITGA3:ITGB1 thereby modulating its activity. Plays an essential role in the maintenance of central laminin-binding integrin ITGA6:ITGB4-containing adhesion complexes. Essential for the proper assembly of the glomerular and tubular basement membranes in kidney. Contributes to T-cell activation by modulating integrin signaling leading to activation of downstream targets PTK2 and MAPK1/MAPK3. The sequence is that of CD151 antigen (CD151) from Chlorocebus aethiops (Green monkey).